The following is a 101-amino-acid chain: MAEIGTMHYLVVAAMLFIIGTVGVVTRRNVVVILMSIELILNAVNLNLVAFSRLYGLHGQVFSIFVMVDAAAEAAVGLGIVIAFFRNKETVNVDEVDLLKW.

3 helical membrane-spanning segments follow: residues 4 to 24 (IGTM…TVGV), 31 to 51 (VVIL…LVAF), and 64 to 84 (IFVM…VIAF).

It belongs to the complex I subunit 4L family. In terms of assembly, NDH-1 is composed of 14 different subunits. Subunits NuoA, H, J, K, L, M, N constitute the membrane sector of the complex.

The protein localises to the cell inner membrane. It carries out the reaction a quinone + NADH + 5 H(+)(in) = a quinol + NAD(+) + 4 H(+)(out). Functionally, NDH-1 shuttles electrons from NADH, via FMN and iron-sulfur (Fe-S) centers, to quinones in the respiratory chain. The immediate electron acceptor for the enzyme in this species is believed to be ubiquinone. Couples the redox reaction to proton translocation (for every two electrons transferred, four hydrogen ions are translocated across the cytoplasmic membrane), and thus conserves the redox energy in a proton gradient. The chain is NADH-quinone oxidoreductase subunit K 1 from Koribacter versatilis (strain Ellin345).